The following is a 273-amino-acid chain: NH(3)-dependent NAD(+) synthetase (273 aa).

Residue 47-54 (GISGGQDS) coordinates ATP. A Mg(2+)-binding site is contributed by aspartate 53. Residue arginine 139 coordinates deamido-NAD(+). Residue threonine 159 coordinates ATP. Glutamate 164 contacts Mg(2+). The deamido-NAD(+) site is built by lysine 172 and aspartate 179. Residues lysine 188 and threonine 210 each coordinate ATP. 259 to 260 (HK) is a binding site for deamido-NAD(+).

This sequence belongs to the NAD synthetase family. In terms of assembly, homodimer.

It carries out the reaction deamido-NAD(+) + NH4(+) + ATP = AMP + diphosphate + NAD(+) + H(+). Its pathway is cofactor biosynthesis; NAD(+) biosynthesis; NAD(+) from deamido-NAD(+) (ammonia route): step 1/1. Functionally, catalyzes the ATP-dependent amidation of deamido-NAD to form NAD. Uses ammonia as a nitrogen source. This Staphylococcus aureus (strain bovine RF122 / ET3-1) protein is NH(3)-dependent NAD(+) synthetase.